Consider the following 411-residue polypeptide: Tyrosine--tRNA ligase (411 aa).

An L-tyrosine-binding site is contributed by Tyr-33. Residues 38–47 (PTAESLHLGN) carry the 'HIGH' region motif. Residues Tyr-160 and Gln-164 each contribute to the L-tyrosine site. The 'KMSKS' region motif lies at 222 to 226 (KIGKS). An ATP-binding site is contributed by Lys-225. In terms of domain architecture, S4 RNA-binding spans 347-411 (SVIETLIKNK…KKQVILFKTV (65 aa)).

The protein belongs to the class-I aminoacyl-tRNA synthetase family. TyrS type 1 subfamily. In terms of assembly, homodimer.

The protein resides in the cytoplasm. It carries out the reaction tRNA(Tyr) + L-tyrosine + ATP = L-tyrosyl-tRNA(Tyr) + AMP + diphosphate + H(+). In terms of biological role, catalyzes the attachment of tyrosine to tRNA(Tyr) in a two-step reaction: tyrosine is first activated by ATP to form Tyr-AMP and then transferred to the acceptor end of tRNA(Tyr). This is Tyrosine--tRNA ligase from Mycoplasmopsis agalactiae (strain NCTC 10123 / CIP 59.7 / PG2) (Mycoplasma agalactiae).